Consider the following 129-residue polypeptide: Small ribosomal subunit protein uS11 (129 aa).

The protein belongs to the universal ribosomal protein uS11 family. As to quaternary structure, part of the 30S ribosomal subunit. Interacts with proteins S7 and S18. Binds to IF-3.

Located on the platform of the 30S subunit, it bridges several disparate RNA helices of the 16S rRNA. Forms part of the Shine-Dalgarno cleft in the 70S ribosome. In Pelotomaculum thermopropionicum (strain DSM 13744 / JCM 10971 / SI), this protein is Small ribosomal subunit protein uS11.